A 329-amino-acid polypeptide reads, in one-letter code: MVKTQRVVITPGEPAGIGPDLVVQLAQREWPVELVVCADATLLTNRAAMLGLPLTLRPYSPNSPAQPQTAGTLTLLPVALRAPVTAGQLAVENGHYVVETLARACDGCLNGEFAALITGPVHKGVINDAGIPFTGHTEFFEERSQAKKVVMMLATEELRVALATTHLPLRDIADAITPALLHEVIAILHHDLRTKFGIAEPRILVCGLNPHAGEGGHMGTEEIDTIIPVLNELRAQGMKLNGPLPADTLFQPKYLDNADAVLAMYHDQGLPVLKYQGFGRGVNITLGLPFIRTSVDHGTALELAGRGKADVGSFITALNLAIKMIVNTQ.

The substrate site is built by His136 and Thr137. 3 residues coordinate a divalent metal cation: His166, His211, and His266. The substrate site is built by Lys274, Asn283, and Arg292.

This sequence belongs to the PdxA family. Homodimer. Zn(2+) is required as a cofactor. The cofactor is Mg(2+). It depends on Co(2+) as a cofactor.

It localises to the cytoplasm. It carries out the reaction 4-(phosphooxy)-L-threonine + NAD(+) = 3-amino-2-oxopropyl phosphate + CO2 + NADH. Its pathway is cofactor biosynthesis; pyridoxine 5'-phosphate biosynthesis; pyridoxine 5'-phosphate from D-erythrose 4-phosphate: step 4/5. Its function is as follows. Catalyzes the NAD(P)-dependent oxidation of 4-(phosphooxy)-L-threonine (HTP) into 2-amino-3-oxo-4-(phosphooxy)butyric acid which spontaneously decarboxylates to form 3-amino-2-oxopropyl phosphate (AHAP). This Escherichia coli (strain K12 / MC4100 / BW2952) protein is 4-hydroxythreonine-4-phosphate dehydrogenase.